The following is a 192-amino-acid chain: Fe/S biogenesis protein NfuA (192 aa).

[4Fe-4S] cluster is bound by residues C149 and C152.

This sequence belongs to the NfuA family. In terms of assembly, homodimer. [4Fe-4S] cluster is required as a cofactor.

Involved in iron-sulfur cluster biogenesis. Binds a 4Fe-4S cluster, can transfer this cluster to apoproteins, and thereby intervenes in the maturation of Fe/S proteins. Could also act as a scaffold/chaperone for damaged Fe/S proteins. The protein is Fe/S biogenesis protein NfuA of Shewanella oneidensis (strain ATCC 700550 / JCM 31522 / CIP 106686 / LMG 19005 / NCIMB 14063 / MR-1).